We begin with the raw amino-acid sequence, 809 residues long: Leucine-rich repeat and calponin homology domain-containing protein (809 aa).

The interval 27–53 (GSASLPGSGTGSGSGIGHAGNTSSSTS) is disordered. Over residues 34–44 (SGTGSGSGIGH) the composition is skewed to gly residues. LRR repeat units lie at residues 72-96 (EAHF…GTKY), 98-121 (LTDT…VTTF), 122-144 (AFLE…VKQL), 145-168 (SSLT…CFLP), 170-189 (QVLL…LGRL), 191-213 (QTLT…LGEL), 214-236 (RSLR…LTCL), 238-258 (LISL…IRHM), and 260-282 (TLVE…CMRG). Disordered stretches follow at residues 295 to 373 (TKDE…LHCV), 423 to 442 (LSYA…QDDD), and 490 to 550 (KHPN…VDDV). Positions 319–336 (HNSSGNVLEASTTGSTNN) are enriched in polar residues. Residues 351-368 (GLDKRWSHDAPTKSKTDS) are compositionally biased toward basic and acidic residues. Residues 518-532 (NTLPKSIMKQNSNQI) show a composition bias toward polar residues. Residues 662–776 (QREETELMSQ…TVGELFRLHG (115 aa)) form the Calponin-homology (CH) domain. Positions 783–809 (GNSSGAATPTKSPTRTTRATMSPTPLA) are disordered. A compositionally biased stretch (polar residues) spans 788 to 809 (AATPTKSPTRTTRATMSPTPLA).

It localises to the cytoplasm. It is found in the cytoskeleton. Its subcellular location is the cell cortex. The protein resides in the cleavage furrow. In terms of biological role, may play a role in the stabilization of the actin-rich cell cortex during cell division. This is Leucine-rich repeat and calponin homology domain-containing protein from Drosophila melanogaster (Fruit fly).